We begin with the raw amino-acid sequence, 151 residues long: Type 4 adapter protein IcmW (151 aa).

The T4BSS is a complex nanomachine composed of several subcomplexes. This subunit is part of the Type IV Coupling Complex (T4CC), a subcomplex composed of the DotLMNYZ core and the IcmSW-LvgA adapter subunits, linked by the C-terminal tail of DotL. Interacts with IcmS. IcmS and IcmW form a stable complex. Interaction with IcmS greatly enhances the stability of IcmW. Interacts directly with the type 4 coupling protein DotL. Interacts with LvgA. Interacts with effector proteins.

The protein resides in the cytoplasm. Its activity is regulated as follows. Interaction with DotL is critical for the export of IcmSW-dependent substrates. Its function is as follows. Component of the Dot/Icm type IVB secretion system (T4BSS), which is used to inject bacterial effector proteins into eukaryotic host cells. Part of a subcomplex which recruits effector proteins and delivers them to the core transmembrane subcomplex. The IcmS/IcmW protein complex plays an important role in protein translocation by interacting with multiple Dot/Icm effector proteins to facilitate their translocation into host cells. Interaction promotes conformational changes in the effector protein, which may facilitate display of a C-terminal translocation signal. May maintain the substrates in a translocation competent form. Required for intracellular growth in host cells, replicative phagosome formation and phagosome trafficking. This chain is Type 4 adapter protein IcmW, found in Legionella pneumophila subsp. pneumophila (strain Philadelphia 1 / ATCC 33152 / DSM 7513).